Reading from the N-terminus, the 515-residue chain is 2-isopropylmalate synthase (515 aa).

In terms of domain architecture, Pyruvate carboxyltransferase spans 4-266 (IKFFDTTLRD…ETRLNLQEIK (263 aa)). Mn(2+) contacts are provided by Asp13, His201, His203, and Asn237. The tract at residues 391–515 (QLSSIQVQYG…RGENEKVATP (125 aa)) is regulatory domain.

This sequence belongs to the alpha-IPM synthase/homocitrate synthase family. LeuA type 1 subfamily. As to quaternary structure, homodimer. Mn(2+) serves as cofactor.

The protein localises to the cytoplasm. The enzyme catalyses 3-methyl-2-oxobutanoate + acetyl-CoA + H2O = (2S)-2-isopropylmalate + CoA + H(+). Its pathway is amino-acid biosynthesis; L-leucine biosynthesis; L-leucine from 3-methyl-2-oxobutanoate: step 1/4. In terms of biological role, catalyzes the condensation of the acetyl group of acetyl-CoA with 3-methyl-2-oxobutanoate (2-ketoisovalerate) to form 3-carboxy-3-hydroxy-4-methylpentanoate (2-isopropylmalate). The chain is 2-isopropylmalate synthase from Geobacillus kaustophilus (strain HTA426).